The sequence spans 396 residues: Ubiquitin-like modifier-activating enzyme 5 (396 aa).

5 residues coordinate ATP: G76, D97, K120, N143, and N177. C219 and C222 together coordinate Zn(2+). The Glycyl thioester intermediate role is filled by C243. 2 residues coordinate Zn(2+): C296 and C301.

It belongs to the ubiquitin-activating E1 family. UBA5 subfamily.

Functionally, E1-like enzyme which activates UFM1. This Drosophila ananassae (Fruit fly) protein is Ubiquitin-like modifier-activating enzyme 5.